A 254-amino-acid chain; its full sequence is Homeobox protein BarH-like 1 (254 aa).

The disordered stretch occupies residues 1–20 (MQRPGEPGAARFGPPEGCAD). The homeobox DNA-binding region spans 142 to 201 (GRRSRTVFTELQLMGLEKRFEKQKYLSTPDRIDLAESLGLSQLQVKTWYQNRRMKWKKIV). The tract at residues 204–254 (GGGLESPTKPKGRPKKNSIPTSEQLTEQERAKDAEKPAEVPGEPSDRSRED) is disordered. A compositionally biased stretch (basic and acidic residues) spans 230 to 254 (EQERAKDAEKPAEVPGEPSDRSRED).

It belongs to the BAR homeobox family. Widely expressed. Expressed at higher levels in testis and heart. Detected in craniofacial tissue and adult iris, but not in lymphocytes, fibroblasts, choroid retina, retinal pigment epithelium, kidney, or fetal liver.

Its subcellular location is the nucleus. Transcription factor, which is involved in craniofacial development, in odontogenesis and in stomach organogenesis. May have a role in the differentiation of molars from incisors. Plays a role in suppressing endodermal Wnt activity. Binds to a regulatory module of the NCAM promoter. The sequence is that of Homeobox protein BarH-like 1 (BARX1) from Homo sapiens (Human).